We begin with the raw amino-acid sequence, 779 residues long: MINQENNDLYDLNEALKVENLTLNDYEEICKRLKRKPNRTELGMFGVMWSEHCCYRNSKPLLSKFPTEGKHVLVGPGENAGVIDVGNNQKLVFKIESHNHPSAIEPFQGAATGVGGILRDIFTMGARPIAVLNSLRFGNLDKSSNVDLLRGVVSGIAHYGNCVGVPTVGGEIDFDDSYSGNPLVNVMALGLLETEEIVCSGAKNVGSPVLYVGNTTGRDGVGGASFASSELTTTSLDDRPAVQVGDPFIEKSLIEACLDAFKTGDVIAAQDMGAAGLTCSSAEMAANGKLGISIDLDLVPSREDDMSSYQYLLSESQERMLFVVKEEKINDLIEKFSKWGLYASVVGEVIGTNEVIISHKGKIVAKIPTSALSDDTPVNFHNVINNPPDDLLKKWEWKENDLPEIHEKNIFSLKENKNFSFSEIILKLLSNPSIASKRWIYKQYDSQVQSNTVFTPGKSDAAVIRLREQNKKNKSKVFSGVAASVDCNSRWVALDPFRGSIAAVAESARNVSCVGAEPVAITNNLNFSSPENEIGYWQLSSSCNGIAEACKALETPVTGGNVSLYNESKNKDNLITPINPTPVIGMVGKLDNVEKAISSEWKNIEDQIWLIGSHKSETKIAASSYLEYFHGEITGRPPKIDLLDEKFCQSFLRNAILKSLVVSSHDISDGGLAIALAESCILSERGATIELEKDLNRVDNLLFAEGGSRIIFTISKMKQNEWFNYLQLNQIKFPSSVYVKKIGYVSSDTLKIKIDEKNICNIRVEELTEKFNNSISDYF.

Residue His52 is part of the active site. Tyr55 and Lys94 together coordinate ATP. Residue Glu96 participates in Mg(2+) binding. Residues 97–100 (SHNH) and Arg119 each bind substrate. Residue His98 is the Proton acceptor of the active site. A Mg(2+)-binding site is contributed by Asp120. Substrate is bound at residue Gln243. Asp271 serves as a coordination point for Mg(2+). A substrate-binding site is contributed by 315 to 317 (ESQ). ATP contacts are provided by Asn523 and Gly560. Residue Asn561 participates in Mg(2+) binding. Substrate is bound at residue Ser563.

This sequence belongs to the FGAMS family. In terms of assembly, monomer. Part of the FGAM synthase complex composed of 1 PurL, 1 PurQ and 2 PurS subunits.

Its subcellular location is the cytoplasm. It catalyses the reaction N(2)-formyl-N(1)-(5-phospho-beta-D-ribosyl)glycinamide + L-glutamine + ATP + H2O = 2-formamido-N(1)-(5-O-phospho-beta-D-ribosyl)acetamidine + L-glutamate + ADP + phosphate + H(+). It participates in purine metabolism; IMP biosynthesis via de novo pathway; 5-amino-1-(5-phospho-D-ribosyl)imidazole from N(2)-formyl-N(1)-(5-phospho-D-ribosyl)glycinamide: step 1/2. In terms of biological role, part of the phosphoribosylformylglycinamidine synthase complex involved in the purines biosynthetic pathway. Catalyzes the ATP-dependent conversion of formylglycinamide ribonucleotide (FGAR) and glutamine to yield formylglycinamidine ribonucleotide (FGAM) and glutamate. The FGAM synthase complex is composed of three subunits. PurQ produces an ammonia molecule by converting glutamine to glutamate. PurL transfers the ammonia molecule to FGAR to form FGAM in an ATP-dependent manner. PurS interacts with PurQ and PurL and is thought to assist in the transfer of the ammonia molecule from PurQ to PurL. In Prochlorococcus marinus (strain MIT 9215), this protein is Phosphoribosylformylglycinamidine synthase subunit PurL.